Here is a 379-residue protein sequence, read N- to C-terminus: MPMRIERDLHMATGNGETSYTKNSRIQEKVMFQIKPVLEEATRAAYSALLPQTMVVADLGCSSGPNTLRFVSEVIGIIARHCKEHDRRHDYPQLQFFLNDLPGNDFNNLFLLIQQFNKSMARNHKGEAAEALPPCYISGLPGSFYTRIFPSESVHLFHSLFSVHWHSQASEQLKDTKNKCLDIYITKNMPPSMVKLFQQQFEKDFSLFLKLRYEELVSGGQMVLTFIGRKHEDVFTGESNHLYGLLAQSLKSLVDEGLVEKEKLESFYLPIYSPSVGEVEAIVKQVGLFNMNHVKVFEINWDPYGDSEGDDVHDSIRSGENVAKCLRAVMEPLVASQFGEHILDKLFKEYARRVAKHLENEKTKHAILVLSIEKAIIHV.

Residues 1–10 (MPMRIERDLH) are compositionally biased toward basic and acidic residues. The disordered stretch occupies residues 1–21 (MPMRIERDLHMATGNGETSYT). An S-adenosyl-L-homocysteine-binding site is contributed by Tyr-20. Gln-27 provides a ligand contact to anthranilate. Residues Cys-61, Asn-66, Asp-100, Leu-101, Ser-143, and Phe-144 each contribute to the S-adenosyl-L-homocysteine site. The anthranilate site is built by His-164 and Trp-165. Mg(2+) contacts are provided by Glu-265 and Phe-267.

The protein belongs to the methyltransferase superfamily. Type-7 methyltransferase family. SABATH subfamily.

The enzyme catalyses anthranilate + S-adenosyl-L-methionine = O-methyl anthranilate + S-adenosyl-L-homocysteine. It catalyses the reaction benzoate + S-adenosyl-L-methionine = methyl benzoate + S-adenosyl-L-homocysteine. It carries out the reaction salicylate + S-adenosyl-L-methionine = methyl salicylate + S-adenosyl-L-homocysteine. Its function is as follows. Methyltransferase involved in the biosynthesis of methyl anthranilate in response to stresses. Utilizes anthranilic acid as substrate. Produces exclusively the O-methyl ester. Can also use benzoic acid as substrate. Low activity with salicylic acid. In Zea mays (Maize), this protein is Anthranilate O-methyltransferase 3 (AAMT3).